Here is a 189-residue protein sequence, read N- to C-terminus: UPF0149 protein VSAL_I2539 (189 aa).

This sequence belongs to the UPF0149 family.

The sequence is that of UPF0149 protein VSAL_I2539 from Aliivibrio salmonicida (strain LFI1238) (Vibrio salmonicida (strain LFI1238)).